The sequence spans 553 residues: Probable glucomannan 4-beta-mannosyltransferase 1 (553 aa).

Residues 64 to 84 (LLPVFKGLVVMCLVLSIIVFF) traverse the membrane as a helical segment. Aspartate 163 is a catalytic residue. Substrate contacts are provided by aspartate 222 and aspartate 224. Aspartate 316 is an active-site residue. 4 helical membrane-spanning segments follow: residues 395 to 415 (VAVHFLTFFFYCIIVPTSVFF), 431 to 451 (LISIFHTLATPRSFYLVIFWV), 510 to 530 (EVMVGVYILGCALYGLIYGHT), and 531 to 551 (WLHFYLFLQATAFFVSGFGFV).

This sequence belongs to the glycosyltransferase 2 family. Plant cellulose synthase-like A subfamily.

The protein localises to the golgi apparatus membrane. It catalyses the reaction GDP-mannose + (glucomannan)n = GDP + (glucomannan)n+1.. Functionally, probable mannan synthase which consists of a 4-beta-mannosyltransferase activity on mannan using GDP-mannose. The beta-1,4-mannan product is the backbone for galactomannan synthesis by galactomannan galactosyltransferase. Galactomannan is a noncellulosic polysaccharides of plant cell wall. The chain is Probable glucomannan 4-beta-mannosyltransferase 1 from Arabidopsis thaliana (Mouse-ear cress).